We begin with the raw amino-acid sequence, 296 residues long: Elongation factor Ts (296 aa).

The tract at residues T79–V82 is involved in Mg(2+) ion dislocation from EF-Tu.

This sequence belongs to the EF-Ts family.

Its subcellular location is the cytoplasm. In terms of biological role, associates with the EF-Tu.GDP complex and induces the exchange of GDP to GTP. It remains bound to the aminoacyl-tRNA.EF-Tu.GTP complex up to the GTP hydrolysis stage on the ribosome. This chain is Elongation factor Ts, found in Acholeplasma laidlawii (strain PG-8A).